A 541-amino-acid polypeptide reads, in one-letter code: CTP synthase (541 aa).

The tract at residues 1-265 is amidoligase domain; the sequence is MTRFIFITGG…DAVVCRHFGL (265 aa). Position 13 (S13) interacts with CTP. Residue S13 participates in UTP binding. Residue 14–19 coordinates ATP; sequence SLGKGL. L-glutamine is bound at residue Y54. D71 is a binding site for ATP. The Mg(2+) site is built by D71 and E139. Residues 146–148, 186–191, and K222 contribute to the CTP site; these read DIE and KTKPTQ. UTP contacts are provided by residues 186–191 and K222; that span reads KTKPTQ. The Glutamine amidotransferase type-1 domain maps to 290–540; that stretch reads TIAIVGKYIS…IAAAVRQSRL (251 aa). G352 is an L-glutamine binding site. C379 serves as the catalytic Nucleophile; for glutamine hydrolysis. L-glutamine is bound by residues 380-383, E403, and R468; that span reads FGMQ. Catalysis depends on residues H513 and E515.

Belongs to the CTP synthase family. As to quaternary structure, homotetramer.

The enzyme catalyses UTP + L-glutamine + ATP + H2O = CTP + L-glutamate + ADP + phosphate + 2 H(+). It catalyses the reaction L-glutamine + H2O = L-glutamate + NH4(+). The catalysed reaction is UTP + NH4(+) + ATP = CTP + ADP + phosphate + 2 H(+). It participates in pyrimidine metabolism; CTP biosynthesis via de novo pathway; CTP from UDP: step 2/2. With respect to regulation, allosterically activated by GTP, when glutamine is the substrate; GTP has no effect on the reaction when ammonia is the substrate. The allosteric effector GTP functions by stabilizing the protein conformation that binds the tetrahedral intermediate(s) formed during glutamine hydrolysis. Inhibited by the product CTP, via allosteric rather than competitive inhibition. Catalyzes the ATP-dependent amination of UTP to CTP with either L-glutamine or ammonia as the source of nitrogen. Regulates intracellular CTP levels through interactions with the four ribonucleotide triphosphates. This Paramagnetospirillum magneticum (strain ATCC 700264 / AMB-1) (Magnetospirillum magneticum) protein is CTP synthase.